Here is a 214-residue protein sequence, read N- to C-terminus: Protein-L-isoaspartate O-methyltransferase 1 (214 aa).

Serine 62 is an active-site residue.

The protein belongs to the methyltransferase superfamily. L-isoaspartyl/D-aspartyl protein methyltransferase family.

Its subcellular location is the cytoplasm. It carries out the reaction [protein]-L-isoaspartate + S-adenosyl-L-methionine = [protein]-L-isoaspartate alpha-methyl ester + S-adenosyl-L-homocysteine. Functionally, catalyzes the methyl esterification of L-isoaspartyl residues in peptides and proteins that result from spontaneous decomposition of normal L-aspartyl and L-asparaginyl residues. It plays a role in the repair and/or degradation of damaged proteins. The sequence is that of Protein-L-isoaspartate O-methyltransferase 1 from Syntrophobacter fumaroxidans (strain DSM 10017 / MPOB).